Here is a 293-residue protein sequence, read N- to C-terminus: Methylsterol monooxygenase 1 (293 aa).

Helical transmembrane passes span 55-75 and 100-120; these read LIVH…FQFI and GILF…YYFT. The 131-residue stretch at 144-274 folds into the Fatty acid hydroxylase domain; it reads GCAVIEDTWH…FTWWDRIFGT (131 aa). A Histidine box-1 motif is present at residues 157–161; that stretch reads HRLLH. The Histidine box-2 signature appears at 170–174; the sequence is HKVHH. A helical transmembrane segment spans residues 199-219; it reads FFIGIVLLCDHVILLWAWVTM. The Histidine box-3 motif lies at 249–255; it reads HHDFHHM.

This sequence belongs to the sterol desaturase family. Fe cation is required as a cofactor. Ubiquitinated by MARCHF6, leading to proteasomal degradation.

It localises to the endoplasmic reticulum membrane. It carries out the reaction 4,4-dimethyl-5alpha-cholest-7-en-3beta-ol + 6 Fe(II)-[cytochrome b5] + 3 O2 + 5 H(+) = 4alpha-carboxy-4beta-methyl-5alpha-cholest-7-ene-3beta-ol + 6 Fe(III)-[cytochrome b5] + 4 H2O. The enzyme catalyses 4,4-dimethyl-5alpha-cholesta-8,24-dien-3beta-ol + 6 Fe(II)-[cytochrome b5] + 3 O2 + 5 H(+) = 4beta-methylzymosterol-4alpha-carboxylate + 6 Fe(III)-[cytochrome b5] + 4 H2O. It catalyses the reaction 4alpha-methylzymosterol + 6 Fe(II)-[cytochrome b5] + 3 O2 + 5 H(+) = 4alpha-carboxyzymosterol + 6 Fe(III)-[cytochrome b5] + 4 H2O. The catalysed reaction is 4alpha-methyl-5alpha-cholest-7-en-3beta-ol + 6 Fe(II)-[cytochrome b5] + 3 O2 + 5 H(+) = 4alpha-carboxy-5alpha-cholest-7-en-3beta-ol + 6 Fe(III)-[cytochrome b5] + 4 H2O. It carries out the reaction 4,4-dimethyl-5alpha-cholest-8-en-3beta-ol + 6 Fe(II)-[cytochrome b5] + 3 O2 + 5 H(+) = 4alpha-carboxy-4beta-methyl-5alpha-cholest-8-en-3beta-ol + 6 Fe(III)-[cytochrome b5] + 4 H2O. The enzyme catalyses 4alpha-methyl-5alpha-cholest-8-en-3beta-ol + 6 Fe(II)-[cytochrome b5] + 3 O2 + 5 H(+) = 4alpha-carboxy-5alpha-cholest-8-ene-3beta-ol + 6 Fe(III)-[cytochrome b5] + 4 H2O. The protein operates within steroid biosynthesis; zymosterol biosynthesis; zymosterol from lanosterol: step 3/6. It functions in the pathway steroid biosynthesis; cholesterol biosynthesis. Its function is as follows. Catalyzes the three-step monooxygenation required for the demethylation of 4,4-dimethyl and 4alpha-methylsterols, which can be subsequently metabolized to cholesterol. In Rattus norvegicus (Rat), this protein is Methylsterol monooxygenase 1 (Msmo1).